A 426-amino-acid chain; its full sequence is Melibiose/raffinose/stachyose-binding protein MelE (426 aa).

The N-terminal stretch at 1-18 (MKHTFVLFLSLILLVLPG) is a signal peptide. The N-palmitoyl cysteine moiety is linked to residue Cys19. Cys19 carries S-diacylglycerol cysteine lipidation.

This sequence belongs to the bacterial solute-binding protein 1 family. As to quaternary structure, the complex is composed of two ATP-binding proteins (MsmX), two transmembrane proteins (MelC and MelD) and a solute-binding protein (MelE).

It is found in the cell membrane. Part of the ABC transporter complex MelEDC-MsmX involved in melibiose, raffinose and stachyose import. Binds melibiose, raffinose and stachyose. This is Melibiose/raffinose/stachyose-binding protein MelE from Bacillus subtilis (strain 168).